The sequence spans 443 residues: GFKAGVKDYRLTYYTPDYETKDTDILAAFRVTPQPGVPAEEAGAAVAAESSTGTWTTVWTDGLTSLDRYKGRCYHIEAVVGEENQYIAYVAYPLDLFEEGSVTNMFTSIVGNVFGFKALRALRLEDLRIPPAYSKTFQGPPHGIQAERDKLNKYGRPLLGCTIKPKLGLSAKNYGRAVYECLRGGLDFTKDDENVNSQPFMRWRDRFLFCAEALYKAQAETGEIKGHYLNATAATCEEMMKRAIFARELGVPIVMHDYLTGGFTANTSLAHYCRDNGLLLHIHRAMHAVIDRQKNHGMHFRVLAKALRMSGGDHIHAGTVVGKLEGEREMTLGFVDLLRDDYIEKDRSRGIFFTQDWVSMPGVLPVASGGIHVWHMPALTEIFGDDSVLQFGGGTLGHPWGNAPGAVANRVALEACVQARNEGRDLAREGNEIIREACSWSPE.

Lys-3 is subject to N6,N6,N6-trimethyllysine. Positions 112 and 162 each coordinate substrate. Catalysis depends on Lys-164, which acts as the Proton acceptor. Lys-166 contacts substrate. Mg(2+) is bound by residues Lys-190, Asp-192, and Glu-193. Position 190 is an N6-carboxylysine (Lys-190). His-283 serves as the catalytic Proton acceptor. Substrate contacts are provided by Arg-284, His-316, and Ser-368.

Belongs to the RuBisCO large chain family. Type I subfamily. In terms of assembly, heterohexadecamer of 8 large chains and 8 small chains; disulfide-linked. The disulfide link is formed within the large subunit homodimers. It depends on Mg(2+) as a cofactor. The disulfide bond which can form in the large chain dimeric partners within the hexadecamer appears to be associated with oxidative stress and protein turnover.

It is found in the plastid. It localises to the chloroplast. The enzyme catalyses 2 (2R)-3-phosphoglycerate + 2 H(+) = D-ribulose 1,5-bisphosphate + CO2 + H2O. It catalyses the reaction D-ribulose 1,5-bisphosphate + O2 = 2-phosphoglycolate + (2R)-3-phosphoglycerate + 2 H(+). Functionally, ruBisCO catalyzes two reactions: the carboxylation of D-ribulose 1,5-bisphosphate, the primary event in carbon dioxide fixation, as well as the oxidative fragmentation of the pentose substrate in the photorespiration process. Both reactions occur simultaneously and in competition at the same active site. The chain is Ribulose bisphosphate carboxylase large chain from Iris germanica (Bearded iris).